The following is a 362-amino-acid chain: MTTPLTLENISQAPKALLHDHLDGGLRPSTVLELAGQYGYDDLPADDVDELATFFRTAAHSGSLVRYLEPFAHTVGVMQTAEALHRVAFECVEDLAGDNVVYAEVRFAPELHIEGGMGLDAVVDAVLAGFADGEKAAASAGRTITVRCLVTAMRHAARSREIAELAIRFRDRGVVGFDIAGAEAGYPPTRHLDAFEYMRGNNARFTIHAGEAFGLPSIHEAIAFCGADRLGHGVRIVDDITVAPDGQVKLGRLAAILRDKRIPLELCPSSNVQTGAVASIAEHPFDLLARTRFRVTVNTDNRLMSDTTMSQEMLRLVEAFGYGWSDLARFTINAMKSSFIPFDERLALIDDVIKPRYAVLAG.

The Zn(2+) site is built by histidine 19 and histidine 21. Substrate-binding residues include histidine 21, aspartate 23, and glycine 181. Position 208 (histidine 208) interacts with Zn(2+). Glutamate 211 (proton donor) is an active-site residue. Aspartate 300 contributes to the Zn(2+) binding site.

It belongs to the metallo-dependent hydrolases superfamily. Adenosine and AMP deaminases family. Adenosine deaminase subfamily. Zn(2+) is required as a cofactor.

It catalyses the reaction adenosine + H2O + H(+) = inosine + NH4(+). It carries out the reaction 2'-deoxyadenosine + H2O + H(+) = 2'-deoxyinosine + NH4(+). Catalyzes the hydrolytic deamination of adenosine and 2-deoxyadenosine. The polypeptide is Adenosine deaminase (Mycobacterium sp. (strain JLS)).